Reading from the N-terminus, the 338-residue chain is Ketol-acid reductoisomerase (NADP(+)) (338 aa).

Positions 1–181 (MQVYYDKDCD…GGGRTGIIET (181 aa)) constitute a KARI N-terminal Rossmann domain. Residues 24-27 (FGSQ), Arg-47, Ser-50, Ser-52, and 82-85 (DEFQ) each bind NADP(+). The active site involves His-107. Residue Gly-133 participates in NADP(+) binding. Residues 182-327 (TFKDETETDL…EKLRSMMPWI (146 aa)) form the KARI C-terminal knotted domain. 4 residues coordinate Mg(2+): Asp-190, Glu-194, Glu-226, and Glu-230. A substrate-binding site is contributed by Ser-251.

Belongs to the ketol-acid reductoisomerase family. Mg(2+) serves as cofactor.

The enzyme catalyses (2R)-2,3-dihydroxy-3-methylbutanoate + NADP(+) = (2S)-2-acetolactate + NADPH + H(+). The catalysed reaction is (2R,3R)-2,3-dihydroxy-3-methylpentanoate + NADP(+) = (S)-2-ethyl-2-hydroxy-3-oxobutanoate + NADPH + H(+). Its pathway is amino-acid biosynthesis; L-isoleucine biosynthesis; L-isoleucine from 2-oxobutanoate: step 2/4. The protein operates within amino-acid biosynthesis; L-valine biosynthesis; L-valine from pyruvate: step 2/4. Its function is as follows. Involved in the biosynthesis of branched-chain amino acids (BCAA). Catalyzes an alkyl-migration followed by a ketol-acid reduction of (S)-2-acetolactate (S2AL) to yield (R)-2,3-dihydroxy-isovalerate. In the isomerase reaction, S2AL is rearranged via a Mg-dependent methyl migration to produce 3-hydroxy-3-methyl-2-ketobutyrate (HMKB). In the reductase reaction, this 2-ketoacid undergoes a metal-dependent reduction by NADPH to yield (R)-2,3-dihydroxy-isovalerate. This chain is Ketol-acid reductoisomerase (NADP(+)), found in Marinobacter nauticus (strain ATCC 700491 / DSM 11845 / VT8) (Marinobacter aquaeolei).